We begin with the raw amino-acid sequence, 464 residues long: tRNA-2-methylthio-N(6)-dimethylallyladenosine synthase (464 aa).

Positions 5 to 122 (RKLYVKSFGC…LPEMLARVRD (118 aa)) constitute an MTTase N-terminal domain. The [4Fe-4S] cluster site is built by Cys-14, Cys-50, Cys-85, Cys-163, Cys-167, and Cys-170. The region spanning 149 to 383 (KKRGPTAFVT…VLEASKTAFD (235 aa)) is the Radical SAM core domain. Residues 384–446 (RACMGRRFDI…PNSLAGQVVD (63 aa)) form the TRAM domain.

This sequence belongs to the methylthiotransferase family. MiaB subfamily. Monomer. [4Fe-4S] cluster is required as a cofactor.

It is found in the cytoplasm. It catalyses the reaction N(6)-dimethylallyladenosine(37) in tRNA + (sulfur carrier)-SH + AH2 + 2 S-adenosyl-L-methionine = 2-methylsulfanyl-N(6)-dimethylallyladenosine(37) in tRNA + (sulfur carrier)-H + 5'-deoxyadenosine + L-methionine + A + S-adenosyl-L-homocysteine + 2 H(+). Catalyzes the methylthiolation of N6-(dimethylallyl)adenosine (i(6)A), leading to the formation of 2-methylthio-N6-(dimethylallyl)adenosine (ms(2)i(6)A) at position 37 in tRNAs that read codons beginning with uridine. The polypeptide is tRNA-2-methylthio-N(6)-dimethylallyladenosine synthase (Azorhizobium caulinodans (strain ATCC 43989 / DSM 5975 / JCM 20966 / LMG 6465 / NBRC 14845 / NCIMB 13405 / ORS 571)).